The primary structure comprises 343 residues: Protein rax1 (343 aa).

Residues 1–235 (MASAPRVSEV…NLNPLTCTGR (235 aa)) are Cytoplasmic-facing. Positions 109–228 (ELSNEQTINS…LNHKFKHNLN (120 aa)) constitute an RGS domain. A helical transmembrane segment spans residues 236-256 (FIIGYVSTFAAYWLGFCGIFL). The Extracellular segment spans residues 257 to 263 (DYSRRKR). A helical transmembrane segment spans residues 264–284 (VWTLLPFAFGFYNLICTWSKH). Topologically, residues 285 to 317 (DPVLALLGYSEVKPFHYEKVLQPSIRLSLNRRA) are cytoplasmic. The chain crosses the membrane as a helical span at residues 318–338 (IFVLSIIVLIVGANTAIFSCV). Topologically, residues 339-343 (PSIRL) are extracellular.

Its subcellular location is the cell membrane. It localises to the endoplasmic reticulum membrane. Functionally, may be involved in cell polarization and division. The protein is Protein rax1 (rax1) of Schizosaccharomyces pombe (strain 972 / ATCC 24843) (Fission yeast).